The following is a 378-amino-acid chain: Glutamate 5-kinase (378 aa).

Residue K14 participates in ATP binding. Residues S54, D141, and N153 each contribute to the substrate site. 173–174 (SD) provides a ligand contact to ATP. The 78-residue stretch at 279 to 356 (AGRLTVDAGA…DEISAILGYD (78 aa)) folds into the PUA domain.

It belongs to the glutamate 5-kinase family.

The protein localises to the cytoplasm. It carries out the reaction L-glutamate + ATP = L-glutamyl 5-phosphate + ADP. Its pathway is amino-acid biosynthesis; L-proline biosynthesis; L-glutamate 5-semialdehyde from L-glutamate: step 1/2. In terms of biological role, catalyzes the transfer of a phosphate group to glutamate to form L-glutamate 5-phosphate. The sequence is that of Glutamate 5-kinase from Brucella abortus (strain S19).